Consider the following 313-residue polypeptide: Formate-nitrite transporter (313 aa).

Residues 1–47 (MPKSNTKYVIDPLSVKTSCSSEESYIRCVEYGKSKAHYSSLILLAKA) are Cytoplasmic-facing. Residues 48-68 (ILAGVFVGVCAHASGIAGGLF) form a helical membrane-spanning segment. The Extracellular portion of the chain corresponds to 69–77 (YYHKLREYV). The helical transmembrane segment at 78-98 (GASMSAFVYGFTFPIAFLCII) threads the bilayer. The Cytoplasmic segment spans residues 99 to 128 (CTGSDLFTGNTLAVTTALLHGKVSCLEYVR). Residues 129 to 149 (VMCISLFGNYVGAVSFAFFVS) form a helical membrane-spanning segment. The Extracellular portion of the chain corresponds to 150-185 (YGSGAFHKKEQVDKNHIFQFLNDIAVKKVNHTFVEC). Residue asparagine 179 is glycosylated (N-linked (GlcNAc...) asparagine). Residues 186–206 (ICLAIGCNIFVCLAVYFVLSI) traverse the membrane as a helical segment. Topologically, residues 207–211 (KDGSG) are cytoplasmic. The chain crosses the membrane as a helical span at residues 212–232 (MVFSVFFAVYAFAIAGYEHII). The Extracellular portion of the chain corresponds to 233–260 (ANIYTLNISLMIDTEVSFTQVYFKNLLP). N-linked (GlcNAc...) asparagine glycosylation occurs at asparagine 239. Residues 261-281 (TLIGNYIAGALVLACPLFFIY) form a helical membrane-spanning segment. The Cytoplasmic segment spans residues 282-313 (RSYYINYEKMNEPSGGSLRSISIEMKNDGGAT).

The protein belongs to the FNT transporter (TC 1.A.16) family. In terms of assembly, homopentamer.

It localises to the cell membrane. The protein localises to the vacuole membrane. It carries out the reaction (S)-lactate(in) + H(+)(in) = (S)-lactate(out) + H(+)(out). It catalyses the reaction formate(in) + H(+)(in) = formate(out) + H(+)(out). The catalysed reaction is pyruvate(out) + H(+)(out) = pyruvate(in) + H(+)(in). The enzyme catalyses acetate(out) + H(+)(out) = acetate(in) + H(+)(in). Its activity is regulated as follows. Inhibited by the Malaria Box compound MMV007839 and its derivatives BH296 and BH267.meta. Monocarboxylate-proton symporter that mediates the efflux of the waste product lactate in the intraerythrocytic parasites; active in acidic-to-neutral pH range. Transports L-lactate. This chain is Formate-nitrite transporter, found in Plasmodium ovale.